The following is a 322-amino-acid chain: MKKIAVLTSGGDAPGMNAAIRAVVRTAIYNGIEVYGVYQGYLGLINDDLKKLELGSVGDTIQRGGTFLYSARCPEFKDKEVRAKAIENLRSRGIDGLVVIGGDGSYRGAQRISEECPEIQTIGIPGTIDNDIPGTDYTIGFDSALNTIIESVDKIRDTASSHARTFIVEVMGRDCGDLALWAGLAVGAETIIVPEEKVDIKDVAEKIESGIKRGKKHSIVVVAEGVMGGQLCADELAKYIHVDARVSVLGHIQRGGSPTGQDRVLASRLGGHAVELLMDGKTALGVGIKQNQLTQTKFEDIFNNKGSKFDKQMYKLAQELSI.

G11 contacts ATP. 21–25 provides a ligand contact to ADP; that stretch reads RAVVR. Residues 72 to 73 and 102 to 105 contribute to the ATP site; these read RC and GDGS. D103 contacts Mg(2+). 127–129 contacts substrate; that stretch reads TID. D129 serves as the catalytic Proton acceptor. R156 provides a ligand contact to ADP. Residues R164 and 171-173 each bind substrate; that span reads MGR. ADP-binding positions include 187-189, R213, and 215-217; these read GAE and KKH. Residues E224, R245, and 251–254 contribute to the substrate site; that span reads HIQR.

The protein belongs to the phosphofructokinase type A (PFKA) family. ATP-dependent PFK group I subfamily. Prokaryotic clade 'B1' sub-subfamily. Homotetramer. It depends on Mg(2+) as a cofactor.

The protein resides in the cytoplasm. The catalysed reaction is beta-D-fructose 6-phosphate + ATP = beta-D-fructose 1,6-bisphosphate + ADP + H(+). It participates in carbohydrate degradation; glycolysis; D-glyceraldehyde 3-phosphate and glycerone phosphate from D-glucose: step 3/4. Its activity is regulated as follows. Allosterically activated by ADP and other diphosphonucleosides, and allosterically inhibited by phosphoenolpyruvate. Functionally, catalyzes the phosphorylation of D-fructose 6-phosphate to fructose 1,6-bisphosphate by ATP, the first committing step of glycolysis. This is ATP-dependent 6-phosphofructokinase from Staphylococcus carnosus (strain TM300).